The chain runs to 498 residues: ATP synthase subunit beta, chloroplastic (498 aa).

172–179 is an ATP binding site; the sequence is GGAGVGKT.

It belongs to the ATPase alpha/beta chains family. As to quaternary structure, F-type ATPases have 2 components, CF(1) - the catalytic core - and CF(0) - the membrane proton channel. CF(1) has five subunits: alpha(3), beta(3), gamma(1), delta(1), epsilon(1). CF(0) has four main subunits: a(1), b(1), b'(1) and c(9-12).

The protein localises to the plastid. It localises to the chloroplast thylakoid membrane. The catalysed reaction is ATP + H2O + 4 H(+)(in) = ADP + phosphate + 5 H(+)(out). Functionally, produces ATP from ADP in the presence of a proton gradient across the membrane. The catalytic sites are hosted primarily by the beta subunits. The chain is ATP synthase subunit beta, chloroplastic from Saccharum hybrid (Sugarcane).